A 695-amino-acid chain; its full sequence is Calcium-dependent serine proteinase (695 aa).

The signal sequence occupies residues 1–21 (MGKSSEAWCIVLFSVFASFSA). The CUB 1 domain maps to 22–136 (EPTMHGEILS…TGFAAYYAAI (115 aa)). 4 cysteine pairs are disulfide-bonded: Cys-71–Cys-89, Cys-141–Cys-153, Cys-149–Cys-162, and Cys-164–Cys-177. In terms of domain architecture, EGF-like; calcium-binding spans 137–178 (DVNECTDFTDVPCSHFCNNFIGGYFCSCPPEYFLHDDMRNCG). A (3R)-3-hydroxyasparagine modification is found at Asn-155. The N-linked (GlcNAc...) asparagine glycan is linked to Asn-180. 6 cysteine pairs are disulfide-bonded: Cys-181/Cys-208, Cys-240/Cys-257, Cys-300/Cys-347, Cys-327/Cys-360, Cys-365/Cys-410, and Cys-392/Cys-428. The 116-residue stretch at 181–296 (CSGNVFTALI…KGWKLRYHGD (116 aa)) folds into the CUB 2 domain. Sushi domains follow at residues 298 to 362 (IPCP…RCQP) and 363 to 430 (VDCG…KCVP). Residue Asn-413 is glycosylated (N-linked (GlcNAc...) asparagine). The Peptidase S1 domain occupies 445 to 687 (IFGGFPAKIQ…YKDWILQTMQ (243 aa)). Catalysis depends on charge relay system residues His-482 and Asp-536. 2 cysteine pairs are disulfide-bonded: Cys-602/Cys-625 and Cys-634/Cys-666. The active-site Charge relay system is the Ser-638.

Belongs to the peptidase S1 family. Heterodimer, consisting of heavy and light chains with disulfide bonds. The heavy chain is expected to be a regulatory subunit and the light chain contains the catalytic site. Post-translationally, the iron and 2-oxoglutarate dependent 3-hydroxylation of aspartate and asparagine is (R) stereospecific within EGF domains.

The protein localises to the secreted. It is found in the extracellular space. Its subcellular location is the extracellular matrix. Its function is as follows. Capable of degrading extracellular matrix proteins. CASP degrades type I and IV collagen and fibronectin in the presence of calcium. This chain is Calcium-dependent serine proteinase, found in Mesocricetus auratus (Golden hamster).